Reading from the N-terminus, the 256-residue chain is 5'-nucleotidase SurE (256 aa).

Residues Asp8, Asp9, Ser40, and Asn92 each coordinate a divalent metal cation.

It belongs to the SurE nucleotidase family. A divalent metal cation is required as a cofactor.

It localises to the cytoplasm. It carries out the reaction a ribonucleoside 5'-phosphate + H2O = a ribonucleoside + phosphate. Functionally, nucleotidase that shows phosphatase activity on nucleoside 5'-monophosphates. The polypeptide is 5'-nucleotidase SurE (Rhizobium meliloti (strain 1021) (Ensifer meliloti)).